We begin with the raw amino-acid sequence, 220 residues long: Deoxyribose-phosphate aldolase (220 aa).

D92 (proton donor/acceptor) is an active-site residue. K157 functions as the Schiff-base intermediate with acetaldehyde in the catalytic mechanism. The active-site Proton donor/acceptor is the K186.

Belongs to the DeoC/FbaB aldolase family. DeoC type 1 subfamily.

The protein resides in the cytoplasm. It carries out the reaction 2-deoxy-D-ribose 5-phosphate = D-glyceraldehyde 3-phosphate + acetaldehyde. It participates in carbohydrate degradation; 2-deoxy-D-ribose 1-phosphate degradation; D-glyceraldehyde 3-phosphate and acetaldehyde from 2-deoxy-alpha-D-ribose 1-phosphate: step 2/2. Catalyzes a reversible aldol reaction between acetaldehyde and D-glyceraldehyde 3-phosphate to generate 2-deoxy-D-ribose 5-phosphate. In Caldicellulosiruptor saccharolyticus (strain ATCC 43494 / DSM 8903 / Tp8T 6331), this protein is Deoxyribose-phosphate aldolase.